We begin with the raw amino-acid sequence, 266 residues long: Phosphatidylglycerol--prolipoprotein diacylglyceryl transferase (266 aa).

7 helical membrane passes run 17-37 (LKIHWYGLMYLIGIGGAWLLA), 56-76 (LVFWVACGVILGGRLGYVLFY), 92-112 (WKGGMSFHGGLLGVMLAVWWF), 120-140 (FFQLMDFIAPLVPIGLGAGRI), 171-191 (PSQLYQFALEGVALFVILWLF), 199-219 (ASVSGLFVLCYGIFRFVVEFV), and 233-253 (WLTMGQVLCVPMVLAGIALMV). R139 lines the a 1,2-diacyl-sn-glycero-3-phospho-(1'-sn-glycerol) pocket.

This sequence belongs to the Lgt family.

The protein localises to the cell inner membrane. It catalyses the reaction L-cysteinyl-[prolipoprotein] + a 1,2-diacyl-sn-glycero-3-phospho-(1'-sn-glycerol) = an S-1,2-diacyl-sn-glyceryl-L-cysteinyl-[prolipoprotein] + sn-glycerol 1-phosphate + H(+). Its pathway is protein modification; lipoprotein biosynthesis (diacylglyceryl transfer). In terms of biological role, catalyzes the transfer of the diacylglyceryl group from phosphatidylglycerol to the sulfhydryl group of the N-terminal cysteine of a prolipoprotein, the first step in the formation of mature lipoproteins. The polypeptide is Phosphatidylglycerol--prolipoprotein diacylglyceryl transferase (Pseudomonas aeruginosa (strain UCBPP-PA14)).